We begin with the raw amino-acid sequence, 83 residues long: uncharacterized protein (83 aa).

This is an uncharacterized protein from Vaccinia virus (strain Copenhagen) (VACV).